The primary structure comprises 597 residues: Elongation factor 4 (597 aa).

A tr-type G domain is found at 2–184; that stretch reads QHIRNFSIIA…SIVARVPPPK (183 aa). Residues 14–19 and 131–134 each bind GTP; these read DHGKST and NKMD.

Belongs to the TRAFAC class translation factor GTPase superfamily. Classic translation factor GTPase family. LepA subfamily.

It localises to the cell inner membrane. The catalysed reaction is GTP + H2O = GDP + phosphate + H(+). Required for accurate and efficient protein synthesis under certain stress conditions. May act as a fidelity factor of the translation reaction, by catalyzing a one-codon backward translocation of tRNAs on improperly translocated ribosomes. Back-translocation proceeds from a post-translocation (POST) complex to a pre-translocation (PRE) complex, thus giving elongation factor G a second chance to translocate the tRNAs correctly. Binds to ribosomes in a GTP-dependent manner. The protein is Elongation factor 4 of Bordetella bronchiseptica (strain ATCC BAA-588 / NCTC 13252 / RB50) (Alcaligenes bronchisepticus).